The primary structure comprises 159 residues: Small ribosomal subunit protein uS9 (159 aa).

This sequence belongs to the universal ribosomal protein uS9 family.

This Rickettsia rickettsii (strain Iowa) protein is Small ribosomal subunit protein uS9.